The sequence spans 178 residues: Interleukin-10 (178 aa).

The first 18 residues, Met1 to Ala18, serve as a signal peptide directing secretion. 2 disulfide bridges follow: Cys30–Cys126 and Cys80–Cys132. N-linked (GlcNAc...) asparagine glycosylation is present at Asn134.

This sequence belongs to the IL-10 family. As to quaternary structure, homodimer. Interacts with IL10RA and IL10RB.

Its subcellular location is the secreted. Functionally, major immune regulatory cytokine that acts on many cells of the immune system where it has profound anti-inflammatory functions, limiting excessive tissue disruption caused by inflammation. Mechanistically, IL10 binds to its heterotetrameric receptor comprising IL10RA and IL10RB leading to JAK1 and STAT2-mediated phosphorylation of STAT3. In turn, STAT3 translocates to the nucleus where it drives expression of anti-inflammatory mediators. Targets antigen-presenting cells (APCs) such as macrophages and monocytes and inhibits their release of pro-inflammatory cytokines including granulocyte-macrophage colony-stimulating factor /GM-CSF, granulocyte colony-stimulating factor/G-CSF, IL-1 alpha, IL-1 beta, IL-6, IL-8 and TNF-alpha. Also interferes with antigen presentation by reducing the expression of MHC-class II and co-stimulatory molecules, thereby inhibiting their ability to induce T cell activation. In addition, controls the inflammatory response of macrophages by reprogramming essential metabolic pathways including mTOR signaling. This chain is Interleukin-10 (IL10), found in Macaca fascicularis (Crab-eating macaque).